We begin with the raw amino-acid sequence, 348 residues long: tRNA pseudouridine synthase D (348 aa).

Phenylalanine 27 contacts substrate. Aspartate 80 (nucleophile) is an active-site residue. Asparagine 129 contacts substrate. One can recognise a TRUD domain in the interval 155–303 (GVPNYFGSQR…VEPARRAVLL (149 aa)). A substrate-binding site is contributed by phenylalanine 329.

It belongs to the pseudouridine synthase TruD family.

The enzyme catalyses uridine(13) in tRNA = pseudouridine(13) in tRNA. In terms of biological role, responsible for synthesis of pseudouridine from uracil-13 in transfer RNAs. This is tRNA pseudouridine synthase D from Pectobacterium atrosepticum (strain SCRI 1043 / ATCC BAA-672) (Erwinia carotovora subsp. atroseptica).